An 88-amino-acid polypeptide reads, in one-letter code: Small ribosomal subunit protein bS16c (88 aa).

This sequence belongs to the bacterial ribosomal protein bS16 family.

It is found in the plastid. Its subcellular location is the chloroplast. This chain is Small ribosomal subunit protein bS16c, found in Gossypium barbadense (Sea Island cotton).